Consider the following 963-residue polypeptide: MTALRIISLHIYQYGKFSNRTFDFSASPVQVIYGLNEAGKTTMMSFIESMLFGFPKTKKYEPKTGGVYGGVLEAEHPEYGVLKIERTKGTAEKLSVYTEKGEVKQGDVLKQLFQGTDRSLYKAIYSFDVFGLQEIHAFNRDKIGEFLLFSSLFGAEAVSKLDSRLTKESERLYKPNGRNPQLNQELETLKQLAVKLKQAEAEEAGYHQLLEEKRTLEARLAAAETELKETAGHIRMIEGAIERKPLLNEKATLEQVIAEFPEHAGQFPADGLHQLEKYESHLHPKSAQLEALRVKMAELDKQRQKLIPDKELLAKETLIQELSAAFHMYQSWGEQLAAIQAQLRQTSAQTAAGLEQLNKTDENELLNMNTSYDYEWQLQQAVQQYVQARDRKRQLDETFELARQELEDAEKAVRAASSAILENSQRKDKEAALRAYDETQGQHQEQAKLREQLTFFERQQAKQKKTVIAAGMLFIVLFSLLQQWIPAISFGAALIVYWLVSGKSSSRNSRETRQPMTDISPAEAEMLREALWEDDRNKQHLLTQRAALQQKEAAYERVIQQFEQWEAEMAPSFTQVERFMNELGFKEDPSFLLDAYSLMKDVKKEVKKKHELTIEAGRLKKHRRTFEERVSMLLPVNQSQDISISDALHTLRKNIEREKEIEKQKKEIETDIHYTKEQMLELEQEIQYFHAQIEQLFAAAAAKDRDAFFAIAAISRQLKDTENKLHHVNAQLQGGYPEELELADSNTLSELKDKQFVENERKERLTEEIEQLRSQIALLSVKQEQLEASGMVSDLKLQTEMQKERVKETAKKWASIQMVKQVIRNKLERHKKIELPRLLETAGEFFRPLTDGNYQTIYFSETDDSIMVMHRDGTVYHAEELSQGTCEQLYTAIRFALAVTRQGESKLPFQLDDSFVHFDQERLKRVLHVLYDLSEGGRQILYFTCHEHVKDAFHSSQIIHLVS.

Coiled-coil stretches lie at residues 176-236 (NGRN…HIRM) and 373-467 (DYEW…KKTV). A helical membrane pass occupies residues 468 to 488 (IAAGMLFIVLFSLLQQWIPAI). 2 coiled-coil regions span residues 536 to 570 (RNKQ…AEMA) and 647 to 789 (ALHT…LEAS).

It is found in the cell membrane. This is an uncharacterized protein from Bacillus subtilis (strain 168).